We begin with the raw amino-acid sequence, 149 residues long: Probable methylated-DNA--protein-cysteine methyltransferase (149 aa).

Catalysis depends on C118, which acts as the Alkyl group acceptor.

The protein belongs to the MGMT family.

It catalyses the reaction a 6-O-methyl-2'-deoxyguanosine in DNA + L-cysteinyl-[protein] = S-methyl-L-cysteinyl-[protein] + a 2'-deoxyguanosine in DNA. The catalysed reaction is a 4-O-methyl-thymidine in DNA + L-cysteinyl-[protein] = a thymidine in DNA + S-methyl-L-cysteinyl-[protein]. This chain is Probable methylated-DNA--protein-cysteine methyltransferase (MGMT), found in Acanthamoeba polyphaga (Amoeba).